Reading from the N-terminus, the 311-residue chain is Ribosomal protein L11 methyltransferase (311 aa).

S-adenosyl-L-methionine contacts are provided by T162, G183, D205, and N248.

The protein belongs to the methyltransferase superfamily. PrmA family.

Its subcellular location is the cytoplasm. The enzyme catalyses L-lysyl-[protein] + 3 S-adenosyl-L-methionine = N(6),N(6),N(6)-trimethyl-L-lysyl-[protein] + 3 S-adenosyl-L-homocysteine + 3 H(+). Its function is as follows. Methylates ribosomal protein L11. This chain is Ribosomal protein L11 methyltransferase, found in Bacillus licheniformis (strain ATCC 14580 / DSM 13 / JCM 2505 / CCUG 7422 / NBRC 12200 / NCIMB 9375 / NCTC 10341 / NRRL NRS-1264 / Gibson 46).